A 160-amino-acid chain; its full sequence is Glucan endo-1,3-beta-glucosidase, acidic isoform PR-O (160 aa).

Residue Glu-81 is the Nucleophile of the active site.

It belongs to the glycosyl hydrolase 17 family. Post-translationally, the N-terminus is blocked.

It is found in the secreted. Its subcellular location is the extracellular space. The catalysed reaction is Hydrolysis of (1-&gt;3)-beta-D-glucosidic linkages in (1-&gt;3)-beta-D-glucans.. Functionally, implicated in the defense of plants against pathogens. This Nicotiana tabacum (Common tobacco) protein is Glucan endo-1,3-beta-glucosidase, acidic isoform PR-O (PR0).